The primary structure comprises 710 residues: DNA topoisomerase 1 (710 aa).

The disordered stretch occupies residues M1 to V22. The span at S7–V22 shows a compositional bias: basic residues. In terms of domain architecture, Toprim spans K26–I136. Positions 32 and 105 each coordinate Mg(2+). In terms of domain architecture, Topo IA-type catalytic spans D152–L574. Residues S186–Q191 form an interaction with DNA region. The active-site O-(5'-phospho-DNA)-tyrosine intermediate is Y321. 2 C4-type zinc fingers span residues C595 to C621 and C635 to C663. The segment at C676–C702 adopts a C4-type 3; atypical zinc-finger fold.

Belongs to the type IA topoisomerase family. As to quaternary structure, monomer. Mg(2+) serves as cofactor.

It catalyses the reaction ATP-independent breakage of single-stranded DNA, followed by passage and rejoining.. In terms of biological role, releases the supercoiling and torsional tension of DNA, which is introduced during the DNA replication and transcription, by transiently cleaving and rejoining one strand of the DNA duplex. Introduces a single-strand break via transesterification at a target site in duplex DNA. The scissile phosphodiester is attacked by the catalytic tyrosine of the enzyme, resulting in the formation of a DNA-(5'-phosphotyrosyl)-enzyme intermediate and the expulsion of a 3'-OH DNA strand. The free DNA strand then undergoes passage around the unbroken strand, thus removing DNA supercoils. Finally, in the religation step, the DNA 3'-OH attacks the covalent intermediate to expel the active-site tyrosine and restore the DNA phosphodiester backbone. This Lactococcus lactis subsp. lactis (strain IL1403) (Streptococcus lactis) protein is DNA topoisomerase 1.